Here is a 356-residue protein sequence, read N- to C-terminus: Histidinol-phosphate aminotransferase (356 aa).

Position 214 is an N6-(pyridoxal phosphate)lysine (lysine 214).

It belongs to the class-II pyridoxal-phosphate-dependent aminotransferase family. Histidinol-phosphate aminotransferase subfamily. Homodimer. It depends on pyridoxal 5'-phosphate as a cofactor.

It catalyses the reaction L-histidinol phosphate + 2-oxoglutarate = 3-(imidazol-4-yl)-2-oxopropyl phosphate + L-glutamate. Its pathway is amino-acid biosynthesis; L-histidine biosynthesis; L-histidine from 5-phospho-alpha-D-ribose 1-diphosphate: step 7/9. The polypeptide is Histidinol-phosphate aminotransferase (Escherichia coli O81 (strain ED1a)).